The sequence spans 582 residues: Bifunctional lycopene cyclase/phytoene synthase (582 aa).

Residues 1–261 (MNQNGTRLCY…VVLGLVGCDY (261 aa)) are lycopene beta-cyclase. The next 6 helical transmembrane spans lie at 34–54 (CTYT…FFTA), 59–79 (KICI…SYLI), 99–121 (IPIE…YCIF), 142–162 (YVVA…LLLG), 170–190 (LILV…YPFL), and 242–262 (ALFF…CDYA). The phytoene synthase stretch occupies residues 268-582 (YESLSQPASD…LLSALVYRLE (315 aa)).

This sequence in the N-terminal section; belongs to the lycopene beta-cyclase family. It in the C-terminal section; belongs to the phytoene/squalene synthase family.

The protein resides in the membrane. It carries out the reaction all-trans-lycopene = gamma-carotene. The enzyme catalyses gamma-carotene = all-trans-beta-carotene. It catalyses the reaction 2 (2E,6E,10E)-geranylgeranyl diphosphate = 15-cis-phytoene + 2 diphosphate. It participates in carotenoid biosynthesis; beta-carotene biosynthesis. Its pathway is carotenoid biosynthesis; phytoene biosynthesis; all-trans-phytoene from geranylgeranyl diphosphate: step 1/1. In terms of biological role, bifunctional enzyme that catalyzes the reactions from geranylgeranyl diphosphate to phytoene (phytoene synthase) and lycopene to beta-carotene via the intermediate gamma-carotene (lycopene cyclase). The sequence is that of Bifunctional lycopene cyclase/phytoene synthase from Aspergillus niger (strain ATCC MYA-4892 / CBS 513.88 / FGSC A1513).